Here is a 379-residue protein sequence, read N- to C-terminus: Protein FAM53B (379 aa).

2 disordered regions span residues 206 to 257 (CPAE…HKQR) and 302 to 348 (AQND…AGKE). Residues 212 to 236 (SPESTPELQRRSGQSGLARSRSQPC) show a composition bias toward polar residues. A compositionally biased stretch (basic residues) spans 239–249 (NHQKIGVKRRR). The Nuclear localization signal motif lies at 246 to 249 (KRRR). Over residues 326–342 (QSDSSSADALIHQSESS) the composition is skewed to polar residues.

Belongs to the FAM53 family. As to quaternary structure, interacts with ctnnb1. In terms of tissue distribution, mainly expressed in proliferating tissues.

The protein resides in the nucleus. Functionally, acts as a regulator of Wnt signaling pathway by regulating beta-catenin (ctnnb1) nuclear localization. Required for appendage regeneration by regulating cell proliferation. The chain is Protein FAM53B from Danio rerio (Zebrafish).